Reading from the N-terminus, the 207-residue chain is Macrophage immunometabolism regulator (207 aa).

The residue at position 1 (Met1) is an N-acetylmethionine. A disordered region spans residues 1-41; it reads MEVDINGDSRSTLTTLPLPVAEGSSPGKAEAEKPRCSSTPC. Phosphoserine occurs at positions 25 and 167.

Belongs to the UNC119-binding protein family. As to quaternary structure, interacts with UNC119 and UNC119B; interaction preferentially takes place when UNC119 and UNC119B are unliganded with myristoylated proteins. Highly expressed in photoreceptors.

The protein resides in the cytoplasm. Its subcellular location is the cell projection. It localises to the cilium. Regulates the macrophage function, by enhancing the resolution of inflammation and wound repair functions mediated by M2 macrophages. The regulation of macrophage function is, due at least in part, to its ability to inhibit glycolysis. May also play a role in trafficking of proteins via its interaction with UNC119 and UNC119B cargo adapters: may help the release of UNC119 and UNC119B cargo or the recycling of UNC119 and UNC119B. May play a role in ciliary membrane localization via its interaction with UNC119B and protein transport into photoreceptor cells. This chain is Macrophage immunometabolism regulator, found in Mus musculus (Mouse).